The primary structure comprises 910 residues: Chitin synthase A (910 aa).

The tract at residues 56–156 is disordered; it reads NYHDDYDPRP…EPAPTPTPAP (101 aa). 2 stretches are compositionally biased toward basic and acidic residues: residues 57-84 and 130-148; these read YHDD…HHDA and DPHD…HDEP. 9 helical membrane passes run 366 to 386, 448 to 468, 583 to 603, 620 to 640, 655 to 675, 701 to 721, 730 to 750, 828 to 848, and 876 to 896; these read WFFQ…IDAG, SAFG…YVAL, VYQT…FLVF, VLFI…FILS, MVYF…FITV, TLII…IIFL, FIQY…YAFC, GVVL…LQAG, and LYSV…FLVV.

Belongs to the chitin synthase family. Class I subfamily.

It localises to the cell membrane. The enzyme catalyses [(1-&gt;4)-N-acetyl-beta-D-glucosaminyl](n) + UDP-N-acetyl-alpha-D-glucosamine = [(1-&gt;4)-N-acetyl-beta-D-glucosaminyl](n+1) + UDP + H(+). In terms of biological role, polymerizes chitin, a structural polymer of the cell wall and septum, by transferring the sugar moiety of UDP-GlcNAc to the non-reducing end of the growing chitin polymer. The sequence is that of Chitin synthase A (CHSA) from Ampelomyces quisqualis (Powdery mildew agent).